Reading from the N-terminus, the 291-residue chain is G1/S-specific cyclin-D2 (291 aa).

A disordered region spans residues 264 to 291; the sequence is QQQQSNPSKTIEELDQASTPTDVRDINL. Thr-282 is subject to Phosphothreonine.

The protein belongs to the cyclin family. Cyclin D subfamily. As to quaternary structure, interacts with the CDK4 and CDK6 protein kinases to form a serine/threonine kinase holoenzyme complex. The cyclin subunit imparts substrate specificity to the complex. In terms of processing, phosphorylation at Thr-282 by MAP kinases is required for ubiquitination and degradation by the DCX(AMBRA1) complex. Ubiquitinated by the DCX(AMBRA1) complex during the transition from G1 to S cell phase, leading to its degradation: ubiquitination is dependent on Thr-282 phosphorylation. The DCX(AMBRA1) complex represents the major regulator of CCND2 stability during the G1/S transition.

The protein resides in the nucleus. Its subcellular location is the cytoplasm. It localises to the nucleus membrane. Regulatory component of the cyclin D2-CDK4 (DC) complex that phosphorylates and inhibits members of the retinoblastoma (RB) protein family including RB1 and regulates the cell-cycle during G(1)/S transition. Phosphorylation of RB1 allows dissociation of the transcription factor E2F from the RB/E2F complex and the subsequent transcription of E2F target genes which are responsible for the progression through the G(1) phase. Hypophosphorylates RB1 in early G(1) phase. Cyclin D-CDK4 complexes are major integrators of various mitogenenic and antimitogenic signals. In Gallus gallus (Chicken), this protein is G1/S-specific cyclin-D2 (CCND2).